A 120-amino-acid polypeptide reads, in one-letter code: Holo-[acyl-carrier-protein] synthase (120 aa).

Aspartate 8 and glutamate 58 together coordinate Mg(2+).

This sequence belongs to the P-Pant transferase superfamily. AcpS family. Mg(2+) is required as a cofactor.

It localises to the cytoplasm. The enzyme catalyses apo-[ACP] + CoA = holo-[ACP] + adenosine 3',5'-bisphosphate + H(+). Transfers the 4'-phosphopantetheine moiety from coenzyme A to a Ser of acyl-carrier-protein. This Anoxybacillus flavithermus (strain DSM 21510 / WK1) protein is Holo-[acyl-carrier-protein] synthase.